Reading from the N-terminus, the 242-residue chain is Large ribosomal subunit protein uL1 (242 aa).

This sequence belongs to the universal ribosomal protein uL1 family. As to quaternary structure, part of the 50S ribosomal subunit.

Functionally, binds directly to 23S rRNA. The L1 stalk is quite mobile in the ribosome, and is involved in E site tRNA release. In terms of biological role, protein L1 is also a translational repressor protein, it controls the translation of the L11 operon by binding to its mRNA. The protein is Large ribosomal subunit protein uL1 of Streptomyces sp. (strain FRI-5).